Reading from the N-terminus, the 126-residue chain is MFKFVMVFAVLGLAAAVAPVSRSDDVHAEVKVLSSDVRADGFDTDLVVDNSIQQAASGDIHGNAHGSFSWISPEGEHVDIKYVADENGYQPVGAVLPTPPPIPEAIVRALAWLEAHPQAPEHGAHH.

The first 16 residues, 1–16 (MFKFVMVFAVLGLAAA), serve as a signal peptide directing secretion. The Chitin-binding type R&amp;R domain maps to 39-100 (ADGFDTDLVV…PVGAVLPTPP (62 aa)).

In terms of biological role, component of the larval cuticle. This Drosophila miranda (Fruit fly) protein is Larval cuticle protein 2 (Lcp2).